The following is a 28-amino-acid chain: HSDAIFTDNYSRFRKQMAVKKYLNSVLT.

At T28 the chain carries Threonine amide.

It belongs to the glucagon family.

The protein resides in the secreted. Its function is as follows. VIP is a neuropeptide involved in a diverse array of physiological processes through activating the PACAP subfamily of class B1 G protein-coupled receptors: VIP receptor 1 (VPR1) and VIP receptor 2 (VPR2). Abundantly expressed throughout the CNS and peripheral nervous systems where they primarily exert neuroprotective and immune modulatory roles. Also causes vasodilation, lowers arterial blood pressure, stimulates myocardial contractility, increases glycogenolysis and relaxes the smooth muscle of trachea, stomach and gall bladder. This Amia calva (Bowfin) protein is Vasoactive intestinal peptide (vip).